We begin with the raw amino-acid sequence, 424 residues long: Enolase (424 aa).

(2R)-2-phosphoglycerate is bound at residue glutamine 165. Glutamate 207 serves as the catalytic Proton donor. Mg(2+) contacts are provided by aspartate 244, glutamate 283, and aspartate 310. Lysine 335, arginine 364, serine 365, and lysine 386 together coordinate (2R)-2-phosphoglycerate. Lysine 335 serves as the catalytic Proton acceptor.

This sequence belongs to the enolase family. Requires Mg(2+) as cofactor.

It localises to the cytoplasm. The protein resides in the secreted. Its subcellular location is the cell surface. The enzyme catalyses (2R)-2-phosphoglycerate = phosphoenolpyruvate + H2O. It functions in the pathway carbohydrate degradation; glycolysis; pyruvate from D-glyceraldehyde 3-phosphate: step 4/5. In terms of biological role, catalyzes the reversible conversion of 2-phosphoglycerate (2-PG) into phosphoenolpyruvate (PEP). It is essential for the degradation of carbohydrates via glycolysis. The protein is Enolase of Chlamydia caviae (strain ATCC VR-813 / DSM 19441 / 03DC25 / GPIC) (Chlamydophila caviae).